Reading from the N-terminus, the 279-residue chain is Acetylglutamate kinase (279 aa).

Residues 62–63 (GG), Arg-84, and Asn-177 contribute to the substrate site.

It belongs to the acetylglutamate kinase family. ArgB subfamily.

Its subcellular location is the cytoplasm. The enzyme catalyses N-acetyl-L-glutamate + ATP = N-acetyl-L-glutamyl 5-phosphate + ADP. Its pathway is amino-acid biosynthesis; L-arginine biosynthesis; N(2)-acetyl-L-ornithine from L-glutamate: step 2/4. Catalyzes the ATP-dependent phosphorylation of N-acetyl-L-glutamate. This is Acetylglutamate kinase from Pseudothermotoga lettingae (strain ATCC BAA-301 / DSM 14385 / NBRC 107922 / TMO) (Thermotoga lettingae).